A 274-amino-acid polypeptide reads, in one-letter code: Orotidine 5'-phosphate decarboxylase (274 aa).

Residues Asp40, 62–64 (KTH), 93–102 (DRKFVDIGNT), Tyr227, and Arg245 contribute to the substrate site. Residue Lys95 is the Proton donor of the active site.

It belongs to the OMP decarboxylase family.

It carries out the reaction orotidine 5'-phosphate + H(+) = UMP + CO2. It functions in the pathway pyrimidine metabolism; UMP biosynthesis via de novo pathway; UMP from orotate: step 2/2. This is Orotidine 5'-phosphate decarboxylase (URA3) from Coccidioides posadasii (strain RMSCC 757 / Silveira) (Valley fever fungus).